The following is a 475-amino-acid chain: Ribulose bisphosphate carboxylase large chain (475 aa).

The propeptide occupies 1–2 (MS). The residue at position 3 (proline 3) is an N-acetylproline. Lysine 14 carries the N6,N6,N6-trimethyllysine modification. Substrate contacts are provided by asparagine 123 and threonine 173. Catalysis depends on lysine 175, which acts as the Proton acceptor. Position 177 (lysine 177) interacts with substrate. The Mg(2+) site is built by lysine 201, aspartate 203, and glutamate 204. Lysine 201 carries the post-translational modification N6-carboxylysine. Histidine 294 serves as the catalytic Proton acceptor. 3 residues coordinate substrate: arginine 295, histidine 327, and serine 379.

The protein belongs to the RuBisCO large chain family. Type I subfamily. In terms of assembly, heterohexadecamer of 8 large chains and 8 small chains; disulfide-linked. The disulfide link is formed within the large subunit homodimers. Requires Mg(2+) as cofactor. The disulfide bond which can form in the large chain dimeric partners within the hexadecamer appears to be associated with oxidative stress and protein turnover.

The protein resides in the plastid. It is found in the chloroplast. It carries out the reaction 2 (2R)-3-phosphoglycerate + 2 H(+) = D-ribulose 1,5-bisphosphate + CO2 + H2O. The catalysed reaction is D-ribulose 1,5-bisphosphate + O2 = 2-phosphoglycolate + (2R)-3-phosphoglycerate + 2 H(+). In terms of biological role, ruBisCO catalyzes two reactions: the carboxylation of D-ribulose 1,5-bisphosphate, the primary event in carbon dioxide fixation, as well as the oxidative fragmentation of the pentose substrate in the photorespiration process. Both reactions occur simultaneously and in competition at the same active site. This Platanus occidentalis (Sycamore) protein is Ribulose bisphosphate carboxylase large chain.